A 107-amino-acid chain; its full sequence is Large ribosomal subunit protein uL24 (107 aa).

It belongs to the universal ribosomal protein uL24 family. Part of the 50S ribosomal subunit.

Its function is as follows. One of two assembly initiator proteins, it binds directly to the 5'-end of the 23S rRNA, where it nucleates assembly of the 50S subunit. One of the proteins that surrounds the polypeptide exit tunnel on the outside of the subunit. This is Large ribosomal subunit protein uL24 from Streptomyces avermitilis (strain ATCC 31267 / DSM 46492 / JCM 5070 / NBRC 14893 / NCIMB 12804 / NRRL 8165 / MA-4680).